Consider the following 270-residue polypeptide: Regulatory protein RecX (270 aa).

This sequence belongs to the RecX family.

The protein localises to the cytoplasm. Modulates RecA activity. In Bacillus anthracis (strain A0248), this protein is Regulatory protein RecX.